Reading from the N-terminus, the 307-residue chain is MLILISFTALILFFLAGMNMLRKGLISMAYSKIEERLLLFTDHPLKAFLISIVFTGILQSSSAFMVIVIGFVSAGVLSFKRTIPMILGTNVGSTFTTEFIAIKMDIVIWVLLIGGLLFFLTGRYPLKQLGTSFLGLGIIFFCISGFSHLAGPLTKLKTGADVLYHVNDSNWSALLIGMVLTAIIHSSSVCIGILMSFMNEGIIGLTQAMSVVLGSNIGTCITAVMAAVSGGYAAKQTAYAHVVFNVLGVALVLPFLTAATGFVEQLSPDPAQKIAHFSLLFNVVTALLFLPLTNLFYRLIHLLIPAK.

Transmembrane regions (helical) follow at residues 1-21, 52-72, 99-119, 133-153, 174-194, 208-228, 242-262, and 277-297; these read MLILISFTALILFFLAGMNML, IVFTGILQSSSAFMVIVIGFV, FIAIKMDIVIWVLLIGGLLFF, FLGLGIIFFCISGFSHLAGPL, LLIGMVLTAIIHSSSVCIGIL, AMSVVLGSNIGTCITAVMAAV, VVFNVLGVALVLPFLTAATGF, and FSLLFNVVTALLFLPLTNLFY.

It is found in the cell membrane. This is an uncharacterized protein from Bacillus subtilis (strain 168).